The primary structure comprises 274 residues: Beta-lysine N(6)-acetyltransferase (274 aa).

Positions 123–274 (FHLKIANETD…DMNFWYKLSE (152 aa)) constitute an N-acetyltransferase domain.

This sequence belongs to the acetyltransferase family.

The catalysed reaction is (3S)-3,6-diaminohexanoate + acetyl-CoA = (3S)-6-acetamido-3-aminohexanoate + CoA + H(+). In terms of biological role, catalyzes the acetylation of beta-lysine to N6-acetyl-beta-lysine, a compatible solute produced by methanogenic archaea that helps cells to cope with salt stress. The chain is Beta-lysine N(6)-acetyltransferase from Methanococcus maripaludis (strain DSM 14266 / JCM 13030 / NBRC 101832 / S2 / LL).